Here is a 493-residue protein sequence, read N- to C-terminus: 3-octaprenyl-4-hydroxybenzoate carboxy-lyase (493 aa).

N172 provides a ligand contact to Mn(2+). Residues 175 to 177 (IYR), 189 to 191 (RWL), and 194 to 195 (RG) each bind prenylated FMN. Position 238 (E238) interacts with Mn(2+). Catalysis depends on D287, which acts as the Proton donor.

Belongs to the UbiD family. Homohexamer. Prenylated FMN serves as cofactor. The cofactor is Mn(2+).

It is found in the cell membrane. It catalyses the reaction a 4-hydroxy-3-(all-trans-polyprenyl)benzoate + H(+) = a 2-(all-trans-polyprenyl)phenol + CO2. The protein operates within cofactor biosynthesis; ubiquinone biosynthesis. Catalyzes the decarboxylation of 3-octaprenyl-4-hydroxy benzoate to 2-octaprenylphenol, an intermediate step in ubiquinone biosynthesis. The chain is 3-octaprenyl-4-hydroxybenzoate carboxy-lyase from Shewanella piezotolerans (strain WP3 / JCM 13877).